We begin with the raw amino-acid sequence, 258 residues long: Imidazole glycerol phosphate synthase subunit HisF (258 aa).

Catalysis depends on residues Asp-11 and Asp-130.

This sequence belongs to the HisA/HisF family. Heterodimer of HisH and HisF.

It is found in the cytoplasm. The enzyme catalyses 5-[(5-phospho-1-deoxy-D-ribulos-1-ylimino)methylamino]-1-(5-phospho-beta-D-ribosyl)imidazole-4-carboxamide + L-glutamine = D-erythro-1-(imidazol-4-yl)glycerol 3-phosphate + 5-amino-1-(5-phospho-beta-D-ribosyl)imidazole-4-carboxamide + L-glutamate + H(+). Its pathway is amino-acid biosynthesis; L-histidine biosynthesis; L-histidine from 5-phospho-alpha-D-ribose 1-diphosphate: step 5/9. IGPS catalyzes the conversion of PRFAR and glutamine to IGP, AICAR and glutamate. The HisF subunit catalyzes the cyclization activity that produces IGP and AICAR from PRFAR using the ammonia provided by the HisH subunit. This Bradyrhizobium sp. (strain BTAi1 / ATCC BAA-1182) protein is Imidazole glycerol phosphate synthase subunit HisF.